The sequence spans 676 residues: ATP-dependent zinc metalloprotease FtsH (676 aa).

Over methionine 1–histidine 12 the chain is Cytoplasmic. The chain crosses the membrane as a helical span at residues methionine 13–threonine 33. Over lysine 34 to histidine 115 the chain is Extracellular. A helical transmembrane segment spans residues valine 116–phenylalanine 136. Residues alanine 137–threonine 676 are Cytoplasmic-facing. An ATP-binding site is contributed by glycine 212–threonine 219. Histidine 433 is a Zn(2+) binding site. Glutamate 434 is an active-site residue. 2 residues coordinate Zn(2+): histidine 437 and aspartate 509. The disordered stretch occupies residues glutamate 610 to threonine 676. Over residues asparagine 615–threonine 636 the composition is skewed to polar residues. The segment covering asparagine 650–glutamate 667 has biased composition (low complexity).

It in the central section; belongs to the AAA ATPase family. In the C-terminal section; belongs to the peptidase M41 family. In terms of assembly, homohexamer. It depends on Zn(2+) as a cofactor.

It localises to the cell membrane. Its function is as follows. Acts as a processive, ATP-dependent zinc metallopeptidase for both cytoplasmic and membrane proteins. Plays a role in the quality control of integral membrane proteins. This chain is ATP-dependent zinc metalloprotease FtsH, found in Aster yellows witches'-broom phytoplasma (strain AYWB).